A 376-amino-acid polypeptide reads, in one-letter code: uncharacterized protein (376 aa).

Belongs to the YCR102c/YLR460c/YNL134c family.

This is an uncharacterized protein from Saccharomyces cerevisiae (strain ATCC 204508 / S288c) (Baker's yeast).